The chain runs to 132 residues: Small ribosomal subunit protein uS8c (132 aa).

This sequence belongs to the universal ribosomal protein uS8 family. As to quaternary structure, part of the 30S ribosomal subunit.

The protein localises to the plastid. Its subcellular location is the chloroplast. Its function is as follows. One of the primary rRNA binding proteins, it binds directly to 16S rRNA central domain where it helps coordinate assembly of the platform of the 30S subunit. This chain is Small ribosomal subunit protein uS8c (rps8), found in Huperzia lucidula (Shining clubmoss).